The primary structure comprises 85 residues: Conotoxin Lt28.2 (85 aa).

The N-terminal stretch at methionine 1–alanine 21 is a signal peptide. Residues valine 22 to lysine 40 constitute a propeptide that is removed on maturation.

It belongs to the conotoxin D superfamily. Contains 5 disulfide bonds. In terms of tissue distribution, expressed by the venom duct.

The protein localises to the secreted. Its function is as follows. Probable neurotoxin. This chain is Conotoxin Lt28.2, found in Conus litteratus (Lettered cone).